The following is an 807-amino-acid chain: Glycerol-3-phosphate acyltransferase (807 aa).

An HXXXXD motif motif is present at residues 305–310; sequence CHRSHM.

Belongs to the GPAT/DAPAT family.

It is found in the cell inner membrane. It catalyses the reaction sn-glycerol 3-phosphate + an acyl-CoA = a 1-acyl-sn-glycero-3-phosphate + CoA. It functions in the pathway phospholipid metabolism; CDP-diacylglycerol biosynthesis; CDP-diacylglycerol from sn-glycerol 3-phosphate: step 1/3. The polypeptide is Glycerol-3-phosphate acyltransferase (Shigella boydii serotype 18 (strain CDC 3083-94 / BS512)).